Reading from the N-terminus, the 516-residue chain is Probable serine/threonine-protein kinase ECU02_0550 (516 aa).

The Protein kinase domain occupies Y4–F230. Residues I10–V18 and K32 contribute to the ATP site. D120 (proton acceptor) is an active-site residue.

It belongs to the protein kinase superfamily. CAMK Ser/Thr protein kinase family.

It catalyses the reaction L-seryl-[protein] + ATP = O-phospho-L-seryl-[protein] + ADP + H(+). The enzyme catalyses L-threonyl-[protein] + ATP = O-phospho-L-threonyl-[protein] + ADP + H(+). The chain is Probable serine/threonine-protein kinase ECU02_0550 from Encephalitozoon cuniculi (strain GB-M1) (Microsporidian parasite).